We begin with the raw amino-acid sequence, 176 residues long: Ribosome maturation factor RimM (176 aa).

The 80-residue stretch at 97–176 (EDEFYWRDLI…QILVDWDPDF (80 aa)) folds into the PRC barrel domain.

Belongs to the RimM family. As to quaternary structure, binds ribosomal protein uS19.

It is found in the cytoplasm. Its function is as follows. An accessory protein needed during the final step in the assembly of 30S ribosomal subunit, possibly for assembly of the head region. Essential for efficient processing of 16S rRNA. May be needed both before and after RbfA during the maturation of 16S rRNA. It has affinity for free ribosomal 30S subunits but not for 70S ribosomes. The polypeptide is Ribosome maturation factor RimM (Shewanella sp. (strain ANA-3)).